The chain runs to 1409 residues: MRINRWIWWATVILLYLRTGLAADFFRSSEENDRKSSDDLDNFNSTKIEPDKPKTAKELGVKSCESNQDCVHDGVCHRGNDGHGICMCPRSCPAITPKQCGYNYRTPSTCLLMDADYRSKYDVKEPTCYSRKCVCPPQFDDVHVTANQKPLRLNSTLLPTKCDKRDLAVVARAHPSTSVSKGIDVTLFCCINVDPEGFIDVASVFFIQNGTIMREATSHPFAPRNGLARRVHEKYSCWELEIKNAQTSDSGSYMCRVTASASDLDVTDTMQFEVKAPRQIKNLTVNPSERDAIVTWESEGGEDMAIDLRLVRRTDTRGQVVFSKDNLTSPVSIKDLRAATPYTLFVSGNNGQVPFEFTEHFTTKQKRPFPPKEEDVRVLNSGSALSCEVEWKSPAEPNGRITKYFVSVRGAMRKSDGSLTPDDLPAAVEVDKRCANWDGDENTSKHNGINPIDFANEFYSCKFGPLKPNRNYTVTVWAENSAGRSLPAVFHKNCVTNYAQPDMVETPQPLLSNNHSTFSLTFPQPPDDINGPISCYYIAIVPLPANVSLDILPKSEEIVMHSFSKVFTNNLLPSSAEEKRFFAYIAESYVQLPEETTIGDGVRVSDLKACNVQYLSRYSSEDLALRRGLKYTGFLIVRVDKEEELNRKDVRNGADPNIFRNLIDKSVSPTSRTRTASPMSRHLRQLHLSGPAYGYSAYFKPILLDTESSSSGFGIFMKIILPFLLFLAFATGVTMFFVNRKGHMLSTWCPLFTKMTSKDVVERTLLKQTFGAIPVDDLPTEYVVRHRDTDFLFAQEYESLPHFQLDTVASNRKENAIKNRYNDIRAFDDTRVKLKKINGDDYSDYINANFIKSWKEKKLFIAAQAPVDATIGDFWRMVWEQESYLIVMVANLTEKNRQQCAKYWPDEQITRYGDIIVEPASFSFHSDYAIRAFDIAHIGECGPDVIPNGNGVEYANVPIVKGQFANNSRRILQYHFTNWNDYKAPECSTGLLRFMYRLRELPQFNNSPVVIHCSAGVGRTGTFISIDSMLDQCLAEDKANIFEFVCNLRRQRNLMVQSLEQYVFIYKALAEWHMYGDTDEDVRDFEDHYQRLCASNRDRAVSFNQQSSTNGSISPRVAIVSSRESMTTSNGETGLEEEFKKLERNLTTPLSSNFAAKDENLLKNRYEAAVPFDKYRVILPPTIGHADSSYINASHIKGYFFDYIAAQDPVSEGTAFDFWRMIADQNVTTVVMLSDETDWSDVEKYWPIDGSGTECHFGSERNSVNVTCVSEEHHQDFIIRNLSYSMKDNESMPANQEVVQYSYTGWPSDSIVPKSANSLMNLIEMVLQRQSSLMGSQAPIVVHCRNGSSESGIFICISLLWLRQKAEQRIDVFQTVKGLQSHRPMMFTRFEQYSFCYRALADYISKTYR.

Residues 1–22 form the signal peptide; that stretch reads MRINRWIWWATVILLYLRTGLA. Residues 23–712 are Extracellular-facing; the sequence is ADFFRSSEEN…LLDTESSSSG (690 aa). Positions 32–53 are disordered; sequence NDRKSSDDLDNFNSTKIEPDKP. In terms of domain architecture, Ig-like C2-type spans 159–267; sequence PTKCDKRDLA…TASASDLDVT (109 aa). The cysteines at positions 189 and 255 are disulfide-linked. 2 Fibronectin type-III domains span residues 276-366 and 372-502; these read APRQ…TKQK and KEED…AQPD. The chain crosses the membrane as a helical span at residues 713-733; the sequence is FGIFMKIILPFLLFLAFATGV. The Cytoplasmic segment spans residues 734–1409; sequence TMFFVNRKGH…LADYISKTYR (676 aa). Tyrosine-protein phosphatase domains follow at residues 793–1072 and 1135–1403; these read FAQE…LAEW and LEEE…LADY. Active-site phosphocysteine intermediate residues include Cys1013 and Cys1344.

This sequence belongs to the protein-tyrosine phosphatase family. Receptor class 2A subfamily. In terms of tissue distribution, expressed in muscles, hypodermis and a subset of neurons. Expressed in the AVA neurons, with high expression in the anterior half of the preanal ganglion where AVA neurons contact the PHB neurons.

Its subcellular location is the cell membrane. It is found in the synapse. The catalysed reaction is O-phospho-L-tyrosyl-[protein] + H2O = L-tyrosyl-[protein] + phosphate. Its function is as follows. Possesses an intrinsic protein tyrosine phosphatase (PTPase) activity. Regulates egl-15 activity which is required for hypodermis-mediated fluid homeostasis and protein degradation in muscle. During the formation of neuromuscular junctions at the larval stage, negatively regulates membrane protrusion from body wall muscles. Plays a role in nicotinic acetylcholine receptor (nAChR)-mediated sensitivity to nicotine. Regulates synaptic levels of nAchR subunit lev-1 in the nerve cord. Promotes the outgrowth of the quaternary dendritic branches of the PVD sensory neurons. In parallel to the sax-7/mnr-1 pathway, also controls the extension of the PVD primary branches. Acts in the netrin/DCC pathway to mediate the formation of synapses between the AVA interneurons and the PHB sensory neurons. Also required for the formation of synapses between the AVA interneurons and the VA10 motor neurons. This Caenorhabditis elegans protein is Receptor-type tyrosine-protein phosphatase.